Consider the following 265-residue polypeptide: Cytochrome c oxidase subunit 3 (265 aa).

7 helical membrane-spanning segments follow: residues 16 to 36 (PWPL…VMYM), 41 to 61 (GGGT…FVWW), 85 to 105 (GIIL…WAFF), 138 to 158 (LILL…LAGL), 162 to 182 (AVYA…FQGI), 200 to 220 (FFLA…FLII), and 242 to 262 (AFYW…IYWW).

The protein belongs to the cytochrome c oxidase subunit 3 family. Component of the cytochrome c oxidase (complex IV, CIV), a multisubunit enzyme composed of a catalytic core of 3 subunits and several supernumerary subunits. The complex exists as a monomer or a dimer and forms supercomplexes (SCs) in the inner mitochondrial membrane with ubiquinol-cytochrome c oxidoreductase (cytochrome b-c1 complex, complex III, CIII).

Its subcellular location is the mitochondrion inner membrane. The enzyme catalyses 4 Fe(II)-[cytochrome c] + O2 + 8 H(+)(in) = 4 Fe(III)-[cytochrome c] + 2 H2O + 4 H(+)(out). Its function is as follows. Component of the cytochrome c oxidase, the last enzyme in the mitochondrial electron transport chain which drives oxidative phosphorylation. The respiratory chain contains 3 multisubunit complexes succinate dehydrogenase (complex II, CII), ubiquinol-cytochrome c oxidoreductase (cytochrome b-c1 complex, complex III, CIII) and cytochrome c oxidase (complex IV, CIV), that cooperate to transfer electrons derived from NADH and succinate to molecular oxygen, creating an electrochemical gradient over the inner membrane that drives transmembrane transport and the ATP synthase. Cytochrome c oxidase is the component of the respiratory chain that catalyzes the reduction of oxygen to water. Electrons originating from reduced cytochrome c in the intermembrane space (IMS) are transferred via the dinuclear copper A center (CU(A)) of subunit 2 and heme A of subunit 1 to the active site in subunit 1, a binuclear center (BNC) formed by heme A3 and copper B (CU(B)). The BNC reduces molecular oxygen to 2 water molecules using 4 electrons from cytochrome c in the IMS and 4 protons from the mitochondrial matrix. The polypeptide is Cytochrome c oxidase subunit 3 (COX3) (Marchantia polymorpha (Common liverwort)).